Here is a 122-residue protein sequence, read N- to C-terminus: MARIAGVNIPTNKRVVIALQYIHGIGPKKAEEITEKVGIPAERRVNQLTDAEVLQIREAIDRDYIVEGDLRREVAMNIKRLMDLGCYRGLRHRRNLPVRGQRTHTNARTRKGKAKPIAGKKK.

Residues 95 to 122 (NLPVRGQRTHTNARTRKGKAKPIAGKKK) are disordered.

The protein belongs to the universal ribosomal protein uS13 family. Part of the 30S ribosomal subunit. Forms a loose heterodimer with protein S19. Forms two bridges to the 50S subunit in the 70S ribosome.

Its function is as follows. Located at the top of the head of the 30S subunit, it contacts several helices of the 16S rRNA. In the 70S ribosome it contacts the 23S rRNA (bridge B1a) and protein L5 of the 50S subunit (bridge B1b), connecting the 2 subunits; these bridges are implicated in subunit movement. Contacts the tRNAs in the A and P-sites. The chain is Small ribosomal subunit protein uS13 from Methylobacterium nodulans (strain LMG 21967 / CNCM I-2342 / ORS 2060).